The sequence spans 196 residues: Phosphoheptose isomerase (196 aa).

One can recognise an SIS domain in the interval 34–193; the sequence is LIETFKIGNK…EQGLFGIFAG (160 aa). A substrate-binding site is contributed by 49 to 51; the sequence is NGG. The Zn(2+) site is built by histidine 58 and glutamate 62. Residues glutamate 62, 91–92, 117–119, serine 122, and glutamine 169 each bind substrate; these read ND and STS. Zn(2+)-binding residues include glutamine 169 and histidine 177.

Belongs to the SIS family. GmhA subfamily. Homotetramer. The cofactor is Zn(2+).

The protein localises to the cytoplasm. It carries out the reaction 2 D-sedoheptulose 7-phosphate = D-glycero-alpha-D-manno-heptose 7-phosphate + D-glycero-beta-D-manno-heptose 7-phosphate. It functions in the pathway carbohydrate biosynthesis; D-glycero-D-manno-heptose 7-phosphate biosynthesis; D-glycero-alpha-D-manno-heptose 7-phosphate and D-glycero-beta-D-manno-heptose 7-phosphate from sedoheptulose 7-phosphate: step 1/1. Its function is as follows. Catalyzes the isomerization of sedoheptulose 7-phosphate in D-glycero-D-manno-heptose 7-phosphate. This is Phosphoheptose isomerase from Trichlorobacter lovleyi (strain ATCC BAA-1151 / DSM 17278 / SZ) (Geobacter lovleyi).